The sequence spans 112 residues: uncharacterized protein (112 aa).

The tract at residues 1–27 (MIASIGDSAEPPLRRTRRAQQQDRPPT) is disordered.

This is an uncharacterized protein from Orgyia pseudotsugata multicapsid polyhedrosis virus (OpMNPV).